The following is a 607-amino-acid chain: Elongation factor 4 (607 aa).

In terms of domain architecture, tr-type G spans 11–193 (SKIRNFSIIA…QIVEKVPAPT (183 aa)). GTP-binding positions include 23–28 (DHGKST) and 140–143 (NKID).

The protein belongs to the TRAFAC class translation factor GTPase superfamily. Classic translation factor GTPase family. LepA subfamily.

The protein localises to the cell membrane. It catalyses the reaction GTP + H2O = GDP + phosphate + H(+). Functionally, required for accurate and efficient protein synthesis under certain stress conditions. May act as a fidelity factor of the translation reaction, by catalyzing a one-codon backward translocation of tRNAs on improperly translocated ribosomes. Back-translocation proceeds from a post-translocation (POST) complex to a pre-translocation (PRE) complex, thus giving elongation factor G a second chance to translocate the tRNAs correctly. Binds to ribosomes in a GTP-dependent manner. This Bacillus mycoides (strain KBAB4) (Bacillus weihenstephanensis) protein is Elongation factor 4.